Reading from the N-terminus, the 671-residue chain is UvrABC system protein B (671 aa).

A Helicase ATP-binding domain is found at 25–412; it reads EGIEAGLAHQ…AGRVVEQVVR (388 aa). 38–45 is a binding site for ATP; the sequence is GVTGSGKT. A Beta-hairpin motif is present at residues 91–114; sequence YYDYYQPEAYVPSSDTFIEKDASI. In terms of domain architecture, Helicase C-terminal spans 429 to 582; sequence QVDDLLSEIT…QIAFNLANGI (154 aa). The disordered stretch occupies residues 601–623; that stretch reads PGSRSKKRKGMAKAAEENARYEN. Residues 614–623 show a composition bias toward basic and acidic residues; it reads AAEENARYEN. Residues 632–667 form the UVR domain; sequence TKRIRQLEEKMYQLARDLEFEAAAQMRDEITKLRER.

This sequence belongs to the UvrB family. As to quaternary structure, forms a heterotetramer with UvrA during the search for lesions. Interacts with UvrC in an incision complex.

It localises to the cytoplasm. The UvrABC repair system catalyzes the recognition and processing of DNA lesions. A damage recognition complex composed of 2 UvrA and 2 UvrB subunits scans DNA for abnormalities. Upon binding of the UvrA(2)B(2) complex to a putative damaged site, the DNA wraps around one UvrB monomer. DNA wrap is dependent on ATP binding by UvrB and probably causes local melting of the DNA helix, facilitating insertion of UvrB beta-hairpin between the DNA strands. Then UvrB probes one DNA strand for the presence of a lesion. If a lesion is found the UvrA subunits dissociate and the UvrB-DNA preincision complex is formed. This complex is subsequently bound by UvrC and the second UvrB is released. If no lesion is found, the DNA wraps around the other UvrB subunit that will check the other stand for damage. The chain is UvrABC system protein B from Pseudomonas fluorescens (strain ATCC BAA-477 / NRRL B-23932 / Pf-5).